The chain runs to 104 residues: Large ribosomal subunit protein uL24 (104 aa).

The protein belongs to the universal ribosomal protein uL24 family. Part of the 50S ribosomal subunit.

Its function is as follows. One of two assembly initiator proteins, it binds directly to the 5'-end of the 23S rRNA, where it nucleates assembly of the 50S subunit. One of the proteins that surrounds the polypeptide exit tunnel on the outside of the subunit. In Buchnera aphidicola subsp. Acyrthosiphon pisum (strain 5A), this protein is Large ribosomal subunit protein uL24.